The chain runs to 185 residues: MLKAKILFVGPCESGKTVLANFLTESSDITEYNPTQGVRILEFENPHVTSNNKGTGCEFELWDCGGDPKFESCWPALMKDSHGVVIVFNADIPSHLKEIETWYSCFVQQQFLQNTQCLLIAHHKPGSGSDKDNPALAPPLNKLKLVHSNLEDDPEEIRMEFIKYLRSIINSVSESRDREEMSIIT.

GTP is bound by residues 10–17, 63–67, and 123–126; these read GPCESGKT, DCGGD, and HKPG.

Belongs to the small GTPase superfamily. Rab family. Component of the IFT complex B, at least composed of IFT20, IFT22, IFT25, IFT27, IFT46, IFT52, TRAF3IP1/IFT54, IFT57, IFT74, IFT80, IFT81, and IFT88. Interacts with IFT88. Interacts with CFAP61.

It localises to the cell projection. The protein resides in the cilium. Its function is as follows. Small GTPase-like component of the intraflagellar transport (IFT) complex B. The sequence is that of Intraflagellar transport protein 22 homolog (IFT22) from Bos taurus (Bovine).